Here is a 372-residue protein sequence, read N- to C-terminus: AA9 family lytic polysaccharide monooxygenase C (372 aa).

The N-terminal stretch at Met-1 to Ser-16 is a signal peptide. Cu(2+) is bound by residues His-17 and His-99. Residues Cys-59 and Cys-189 are joined by a disulfide bond. Positions 174 and 184 each coordinate O2. Residue Tyr-186 coordinates Cu(2+).

It belongs to the polysaccharide monooxygenase AA9 family. The cofactor is Cu(2+).

Its subcellular location is the secreted. The catalysed reaction is [(1-&gt;4)-beta-D-glucosyl]n+m + reduced acceptor + O2 = 4-dehydro-beta-D-glucosyl-[(1-&gt;4)-beta-D-glucosyl]n-1 + [(1-&gt;4)-beta-D-glucosyl]m + acceptor + H2O.. Functionally, lytic polysaccharide monooxygenase (LPMO) that depolymerizes crystalline and amorphous polysaccharides via the oxidation of scissile alpha- or beta-(1-4)-glycosidic bonds, yielding C1 or C4 oxidation products. Catalysis by LPMOs requires the reduction of the active-site copper from Cu(II) to Cu(I) by a reducing agent and H(2)O(2) or O(2) as a cosubstrate. This Aspergillus tamarii protein is AA9 family lytic polysaccharide monooxygenase C.